Here is a 62-residue protein sequence, read N- to C-terminus: Alpha-lytic protease L1 (62 aa).

The active-site Charge relay system is Ser48.

It belongs to the peptidase S1 family. As to quaternary structure, monomer.

The protein localises to the secreted. It catalyses the reaction Preferential cleavage: Ala-|-Xaa, Val-|-Xaa in bacterial cell walls, elastin and other proteins.. With respect to regulation, inhibited by phenylmethanesulfonyl fluoride (PMSF) and p-chloromercuribenzoate (PCMB). Its function is as follows. Has bacteriolytic activity. The polypeptide is Alpha-lytic protease L1 (Lysobacter sp. (strain XL1)).